We begin with the raw amino-acid sequence, 280 residues long: MPFVVVSGLSGSGKSTALRTLEDAGFFITDNLPPELWGAMHDLATARGLERVAVSTDARTRFFLGALEDSYLRLSRRREDLRVLFLEATSEVLLRRYNLTRREHPLGETLLVDFARERELLAPLRALADIVIDTTDLTAAELSQKVLQMLRLEQDFHLRLLSFGFKHAPPRDADLVIDVRSLPNPYYVPELRPRTGLEPAVAGYVFRDEASEQFYREVRDFVRLAAGRARAAGRHGYTVAIGCTGGQHRSVAVAERLAADLTDLGAQVTDHRDMQVGEGG.

8 to 15 (GLSGSGKS) contacts ATP. 57–60 (DART) contributes to the GTP binding site.

Belongs to the RapZ-like family.

Functionally, displays ATPase and GTPase activities. In Deinococcus geothermalis (strain DSM 11300 / CIP 105573 / AG-3a), this protein is Nucleotide-binding protein Dgeo_0723.